Reading from the N-terminus, the 162-residue chain is Ribosome maturation factor RimP (162 aa).

The protein belongs to the RimP family.

It localises to the cytoplasm. Its function is as follows. Required for maturation of 30S ribosomal subunits. In Leptospira biflexa serovar Patoc (strain Patoc 1 / Ames), this protein is Ribosome maturation factor RimP.